A 90-amino-acid chain; its full sequence is UPF0237 protein PAE3582 (90 aa).

In terms of domain architecture, ACT spans 5-74 (VVSVLGADRV…LEEEGKRLGV (70 aa)).

It belongs to the UPF0237 family.

The protein is UPF0237 protein PAE3582 of Pyrobaculum aerophilum (strain ATCC 51768 / DSM 7523 / JCM 9630 / CIP 104966 / NBRC 100827 / IM2).